Here is a 1032-residue protein sequence, read N- to C-terminus: Caspase recruitment domain-containing protein 10 (1032 aa).

3 disordered regions span residues 1 to 23 (MPGR…SEAE), 253 to 276 (RARG…EPDN), and 481 to 553 (EFPS…MSDI). Position 18 is a phosphoserine (Ser-18). One can recognise a CARD domain in the interval 23–115 (EEDALWERIE…EHFTLLTGQE (93 aa)). Residues 138 to 456 (TEVRRLREAR…LEVQLQRAQG (319 aa)) are a coiled coil. Basic and acidic residues-rich tracts occupy residues 261–276 (AEEK…EPDN) and 504–517 (HNSE…KEIN).

CARD10 and BCL10 bind to each other by CARD-CARD interaction. They both participate in a complex with MALT1, where MALT1 binds to BCL10. Interacts with TMEM43; this interaction is essential for EGFR-mediated NF-kappa-B activation. As to expression, detected in adult heart, kidney and liver; lower levels in intestine, placenta, muscle and lung. Also found in fetal lung, liver and kidney.

Its subcellular location is the cytoplasm. Scaffold protein that plays an important role in mediating the activation of NF-kappa-B via BCL10 or EGFR. In Homo sapiens (Human), this protein is Caspase recruitment domain-containing protein 10 (CARD10).